The sequence spans 127 residues: Protein chibby homolog 1 (127 aa).

Over residues 1 to 10 (MPLFGSTFSP) the composition is skewed to polar residues. The disordered stretch occupies residues 1–26 (MPLFGSTFSPKKTPPRKSASLSNLHN). Phosphoserine is present on residues serine 9 and serine 20. Positions 60-112 (IAETGISGGVDRREAQRLRRRNQQLEEENNLLRLKVDILLDMLSETTAESHLM) are minimal region for the interaction with PKD2. A coiled-coil region spans residues 68–125 (GVDRREAQRLRRRNQQLEEENNLLRLKVDILLDMLSETTAESHLMEKELDELKSVSRR). The leucine-zipper; mediates homodimerization stretch occupies residues 77 to 98 (LRRRNQQLEEENNLLRLKVDIL).

Belongs to the chibby family. As to quaternary structure, homodimer. Homodimerization is essential for nuclear localization and interaction with KPNA4 but is dispensable for interaction with CTNNB1. Interacts with polycystin-2/PKD2 and GM130. Interacts with the C-terminal region of CTNNB1. Interacts (C-terminus) with TCIM (C-terminus), TCIM competes with CTNNB1 for the interaction with CBY1. Interacts with FAM92A; this interaction facilitates targeting of FAM92A to cilium basal body. Interacts with CIBAR2. Interacts with KPNA4.

It is found in the nucleus speckle. It localises to the cytoplasm. The protein resides in the cytoskeleton. Its subcellular location is the cilium basal body. The protein localises to the microtubule organizing center. It is found in the centrosome. It localises to the centriole. The protein resides in the golgi apparatus. Its subcellular location is the trans-Golgi network. The protein localises to the cell projection. It is found in the cilium. It localises to the flagellum. The protein resides in the nucleus. Its function is as follows. Inhibits the Wnt/Wingless pathway by binding to CTNNB1/beta-catenin and inhibiting beta-catenin-mediated transcriptional activation through competition with TCF/LEF transcription factors. Has also been shown to play a role in regulating the intracellular trafficking of polycystin-2/PKD2 and possibly of other intracellular proteins. Promotes adipocyte and cardiomyocyte differentiation. The protein is Protein chibby homolog 1 (CBY1) of Bos taurus (Bovine).